An 837-amino-acid polypeptide reads, in one-letter code: Tuftelin-interacting protein 11 (837 aa).

Basic and acidic residues-rich tracts occupy residues 1–13 and 53–64; these read MSLSHLYRDGEGR and VWAERDSDDERP. Disordered stretches follow at residues 1 to 21, 53 to 72, and 85 to 133; these read MSLSHLYRDGEGRIDDDDDER, VWAERDSDDERPSFGGKRAR, and LKKG…KGFA. The interval 1–50 is required for interaction with DHX15; that stretch reads MSLSHLYRDGEGRIDDDDDERENFEITDWDLQNEFNPNRQRHWQTKEEAT. 3 positions are modified to phosphoserine: serine 2, serine 59, and serine 98. Positions 91–102 are enriched in acidic residues; the sequence is EEAELEDSDDEE. Residues 103–116 show a composition bias toward basic and acidic residues; it reads KPVKQDDFPKDFGP. Serine 144 carries the post-translational modification Phosphoserine. The 47-residue stretch at 149–195 folds into the G-patch domain; sequence TKGIGQKLLQKMGYVPGRGLGKNAQGIINPIEAKQRKGKGAVGAYGS. The tract at residues 179–236 is disordered; it reads IEAKQRKGKGAVGAYGSERTTQSMQDFPVVDSEEEAEEEFQKELSQWRKDPSGSKKKP. Serine 210 carries the post-translational modification Phosphoserine. Residues 217 to 231 show a composition bias toward basic and acidic residues; that stretch reads EFQKELSQWRKDPSG. Positions 700 to 705 match the Nuclear localization signal motif; sequence VKDKFN. The required for nuclear speckle localization stretch occupies residues 710-734; it reads IMNRAVSSNVGAYMQPGARENIAYL.

The protein belongs to the TFP11/STIP family. In terms of assembly, identified in the spliceosome C complex. Found in the Intron Large (IL) complex, a post-mRNA release spliceosomal complex containing the excised intron, U2, U5 and U6 snRNPs, and splicing factors. Interacts with TUFT1. Interacts with DHX15; indicative for a recruitment of DHX15 to the IL complex. Interacts with GCFC2.

The protein localises to the cytoplasm. It localises to the nucleus. Functionally, involved in pre-mRNA splicing, specifically in spliceosome disassembly during late-stage splicing events. Intron turnover seems to proceed through reactions in two lariat-intron associated complexes termed Intron Large (IL) and Intron Small (IS). In cooperation with DHX15 seems to mediate the transition of the U2, U5 and U6 snRNP-containing IL complex to the snRNP-free IS complex leading to efficient debranching and turnover of excised introns. May play a role in the differentiation of ameloblasts and odontoblasts or in the forming of the enamel extracellular matrix. The chain is Tuftelin-interacting protein 11 (TFIP11) from Pongo abelii (Sumatran orangutan).